A 113-amino-acid polypeptide reads, in one-letter code: Gonadotropin subunit beta (113 aa).

Disulfide bonds link Cys6–Cys54, Cys20–Cys69, Cys23–Cys107, Cys31–Cys85, Cys35–Cys87, and Cys90–Cys97. Residue Asn10 is glycosylated (N-linked (GlcNAc...) asparagine).

Belongs to the glycoprotein hormones subunit beta family. Heterodimer of an alpha and a beta chain.

The protein resides in the secreted. Its function is as follows. Involved in gametogenesis and steroidogenesis. This is Gonadotropin subunit beta (cgb) from Muraenesox cinereus (Daggertooth pike conger).